The chain runs to 426 residues: Pannexin-1 (426 aa).

Residues 1-40 (MAIAQLATEYVFSDFLLKEPTEPKFKGLRLELAVDKMVTC) are Cytoplasmic-facing. Cys40 carries the S-nitrosocysteine modification. The chain crosses the membrane as a helical span at residues 41–61 (IAVGLPLLLISLAFAQEISIG). The Extracellular segment spans residues 62–106 (TQISCFSPSSFSWRQAAFVDSYCWAAVQQKNSLQSESGNLPLWLH). 2 disulfides stabilise this stretch: Cys66/Cys265 and Cys84/Cys246. A helical transmembrane segment spans residues 107-127 (KFFPYILLLFAILLYLPPLFW). Residues 128 to 217 (RFAAAPHICS…NLIIKYISCR (90 aa)) are Cytoplasmic-facing. A Phosphotyrosine modification is found at Tyr199. Residues 218 to 238 (LLTLIIILLACIYLGYYFSLS) traverse the membrane as a helical segment. The Extracellular portion of the chain corresponds to 239–266 (SLSDEFVCSIKSGILRNDSTVPDQFQCK). The N-linked (GlcNAc...) asparagine glycan is linked to Asn255. A helical membrane pass occupies residues 267-287 (LIAVGIFQLLSVINLVVYVLL). Over 288-426 (APVVVYTLFV…ARQRLLDSSC (139 aa)) the chain is Cytoplasmic. Cys347 carries the S-nitrosocysteine modification. The segment covering 405–414 (DSETKANNGE) has biased composition (polar residues). The disordered stretch occupies residues 405-426 (DSETKANNGEKNARQRLLDSSC). Residues 415 to 426 (KNARQRLLDSSC) show a composition bias toward basic and acidic residues.

This sequence belongs to the pannexin family. As to quaternary structure, homoheptameric. S-nitrosylation inhibits channel currents and ATP release. Post-translationally, N-glycosylation plays a role in cell surface targeting. Glycosylation at its extracellular surface makes unlikely that two oligomers could dock to form an intercellular channel such as in gap junctions. Exists in three glycosylation states: non-glycosylated (GLY0), high-mannose glycosylated (GLY1), and fully mature glycosylated (GLY2). In terms of processing, cleaved by CASP3 and CASP7 during apoptosis. Cleavage opens the channel for the release of metabolites and induces plasma membrane permeability during apoptosis. Phosphorylated at Tyr-199 by SRC. Phosphorylation activates ATP release. Constitutively phosphorylated in vascular smooth muscle cells. In terms of tissue distribution, widely expressed. Highest expression is observed in oocytes and brain. Detected at very low levels in sperm cells.

The protein resides in the cell membrane. It is found in the endoplasmic reticulum membrane. The catalysed reaction is chloride(in) = chloride(out). It catalyses the reaction iodide(out) = iodide(in). The enzyme catalyses ATP(in) = ATP(out). It carries out the reaction K(+)(in) = K(+)(out). The catalysed reaction is Ca(2+)(in) = Ca(2+)(out). It catalyses the reaction Na(+)(in) = Na(+)(out). The enzyme catalyses nitrate(in) = nitrate(out). It carries out the reaction L-aspartate(out) = L-aspartate(in). The catalysed reaction is L-glutamate(out) = L-glutamate(in). It catalyses the reaction D-gluconate(in) = D-gluconate(out). The enzyme catalyses spermidine(in) = spermidine(out). Its function is as follows. Ion channel involved in a variety of physiological functions such as blood pressure regulation, apoptotic cell clearance and oogenesis. Forms anion-selective channels with relatively low conductance and an order of permeabilities: nitrate&gt;iodide&gt;chlroride&gt;&gt;aspartate=glutamate=gluconate. Can release ATP upon activation through phosphorylation or cleavage at C-terminus. May play a role as a Ca(2+)-leak channel to regulate ER Ca(2+) homeostasis. During apoptosis, the C terminal tail is cleaved by caspases, which opens the main pore acting as a large-pore ATP efflux channel with a broad distribution, which allows the regulated release of molecules and ions smaller than 1 kDa, such as nucleotides ATP and UTP, and selective plasma membrane permeability to attract phagocytes that engulf the dying cells. This Homo sapiens (Human) protein is Pannexin-1.